Reading from the N-terminus, the 106-residue chain is Urease subunit beta (106 aa).

It belongs to the urease beta subunit family. As to quaternary structure, heterotrimer of UreA (gamma), UreB (beta) and UreC (alpha) subunits. Three heterotrimers associate to form the active enzyme. The apoenzyme interacts with an accessory complex composed of UreD, UreF and UreG, which is required for the assembly of the nickel containing metallocenter of UreC. The UreE protein may also play a direct role as a metallochaperone in nickel transfer to the urease apoprotein.

It localises to the cytoplasm. It catalyses the reaction urea + 2 H2O + H(+) = hydrogencarbonate + 2 NH4(+). It participates in nitrogen metabolism; urea degradation; CO(2) and NH(3) from urea (urease route): step 1/1. The apoenzyme can be activated in vitro in the presence of nickel ions and carbon dioxide, which promotes carboxylation of 'Lys-217' of the UreC (alpha) subunit. The polypeptide is Urease subunit beta (Klebsiella aerogenes (Enterobacter aerogenes)).